Here is a 193-residue protein sequence, read N- to C-terminus: MSNVVVIAVVLIVASLTGHVSAQMDMSPSSGPSGAPDCMANLMNMTGCLSYVTVGEGGGAAKPDKTCCPALAGLVESSPQCLCYLLSGDMAAQLGIKIDKAKALKLPGVCGVITPDPSLCSLFGIPVGAPVAMGDEGASPAYAPGSMSGAESPGGFGSGPSASRGSDAPSSAPYSLFLNLIIFPLAFAFYIFC.

Positions 1–22 are cleaved as a signal peptide; it reads MSNVVVIAVVLIVASLTGHVSA. Disulfide bonds link C38/C83, C48/C67, C68/C110, and C81/C120. A glycan (N-linked (GlcNAc...) asparagine) is linked at N44. Positions 143–164 are disordered; it reads APGSMSGAESPGGFGSGPSASR. Residue G165 is the site of GPI-anchor amidated glycine attachment. Positions 166 to 193 are cleaved as a propeptide — removed in mature form; it reads SDAPSSAPYSLFLNLIIFPLAFAFYIFC.

The protein belongs to the plant LTP family. Post-translationally, O-glycosylated on hydroxyprolines; noncontiguous hydroxylproline residues are glycosylated with arabinogalactan. Up-regulated in the epidermis of top stems. Expressed in roots, cotyledons, seedlings, leaves, stems, buds, flower and silique walls. Preferentially expressed in the shoot apical meristem and the root meristem. Also detected in expanding leaves and petals, developing flowers, and elongating pistils, stamens and siliques.

The protein resides in the cell membrane. Lipid transfer protein that, together with LTPG1, binds to lipids and functions as a component of the cuticular lipid export machinery that performs extensive export of intracellular lipids (e.g. C29 alkane) from epidermal cells to the surface to build the cuticular wax layer and silique walls. Contributes to pre-invasive defense against some non-host powdery mildew pathogens by preventing the penetration of the epidermal cell wall by the fungal agents (e.g. Blumeria graminis f. sp. hordei (Bgh)). Involved in seed and ovule maturation and development, probably by regulating the fatty acids homeostasis during suberin and sporopollenin biosynthesis or deposition. In Arabidopsis thaliana (Mouse-ear cress), this protein is Non-specific lipid transfer protein GPI-anchored 2.